The chain runs to 503 residues: MPPDTRINKEIMVSWIRKNLLLVLTVSSVVLGALCGFLLRGLQLSPQNIMYISFPGELLMHMLKMMILPLIMSSLISGLAQLDARQSGKLGSLAVTYYMFTTAVAVVTGIFLVLVIHPGDPTIKKEIGTGTEGKTVSTVDTLLDLLRNMFPENVVQATFQQVQTKYIKVRPKVVKNNDSATLAALNNGSLDYVKASVEYTSGMNVLGVIVFCIAIGISLSQLGQEAHVMVQFFVIMDKVIMKLVMTVMWYSPFGIFCLIMGKILEIHDLADTARMLAMYMVTVLSGLAIHSLISLPLIFFVTTKKNPYVFMRGLFQAWITALGTASSSATLPITFNCLEENLGVDRRVTRFVLPVGATINMDGTALYEAVAAIFIAQINGVHLSFGQVVTVSLTATLASIGAASVPSAGLVTMLLVLTAVGLPVKDVSLIVAVDWLLDRIRTSINVLGDAMGAGIVYHYSKADLDAHDRLAATTRSHSIAMNDEKRQLAVYNSLPTDDEKHTH.

At 1 to 18 (MPPDTRINKEIMVSWIRK) the chain is on the cytoplasmic side. A run of 3 helical transmembrane segments spans residues 19–39 (NLLLVLTVSSVVLGALCGFLL), 59–79 (LMHMLKMMILPLIMSSLISGL), and 96–116 (TYYMFTTAVAVVTGIFLVLVI). Topologically, residues 117–198 (HPGDPTIKKE…SLDYVKASVE (82 aa)) are extracellular. 2 N-linked (GlcNAc...) asparagine glycosylation sites follow: Asn177 and Asn187. Helical transmembrane passes span 199 to 219 (YTSGMNVLGVIVFCIAIGISL), 239 to 259 (VIMKLVMTVMWYSPFGIFCLI), 281 to 301 (VTVLSGLAIHSLISLPLIFFV), 369 to 389 (AVAAIFIAQINGVHLSFGQVV), and 400 to 420 (IGAASVPSAGLVTMLLVLTAV).

It belongs to the dicarboxylate/amino acid:cation symporter (DAACS) (TC 2.A.23) family.

It localises to the membrane. In terms of biological role, transports L-glutamate and also L- and D-aspartate. Essential for terminating the postsynaptic action of glutamate by rapidly removing released glutamate from the synaptic cleft. Acts as a symport by cotransporting sodium. The protein is Excitatory amino acid transporter (glt-1) of Caenorhabditis elegans.